The chain runs to 234 residues: Orotidine 5'-phosphate decarboxylase (234 aa).

Substrate contacts are provided by residues Asp-14, Lys-36, 63-72 (DMKLLDIDNT), Thr-118, Arg-179, Gln-188, Gly-208, and Arg-209. Lys-65 serves as the catalytic Proton donor.

The protein belongs to the OMP decarboxylase family. Type 1 subfamily. As to quaternary structure, homodimer.

It catalyses the reaction orotidine 5'-phosphate + H(+) = UMP + CO2. It participates in pyrimidine metabolism; UMP biosynthesis via de novo pathway; UMP from orotate: step 2/2. Functionally, catalyzes the decarboxylation of orotidine 5'-monophosphate (OMP) to uridine 5'-monophosphate (UMP). This is Orotidine 5'-phosphate decarboxylase from Rhizobium meliloti (strain 1021) (Ensifer meliloti).